Consider the following 412-residue polypeptide: Potassium channel, subfamily K, member 13 (412 aa).

At 1–21 the chain is on the cytoplasmic side; it reads MACRSGCCCNSIGSFNEDNAR. Residues 22 to 42 form a helical membrane-spanning segment; sequence FLMLALLIIIYLLCGAAVFSA. Residues 97–117 constitute an intramembrane region (pore-forming); that stretch reads WDFAGAFYFVGTVVSTIGFGM. K(+) contacts are provided by T112, I113, and G114. The selectivity filter 1 stretch occupies residues 112–117; sequence TIGFGM. The helical transmembrane segment at 127-147 threads the bilayer; it reads IFLIFYGLIGCAATILFFNLF. At 148–198 the chain is on the cytoplasmic side; the sequence is LERVITVIAFVLKFCHERRESRKAGPTQNCRRPSTDNRDRRTDSLAGWKPS. Residues 199-219 form a helical membrane-spanning segment; it reads VYCVMLILGVAAILVSCCASA. Residues 229–249 constitute an intramembrane region (pore-forming); that stretch reads YLDALYFCFVAFSTIGFGDMV. 4 residues coordinate K(+): T242, I243, G244, and F245. The interval 242–247 is selectivity filter 2; the sequence is TIGFGD. Residues 268-288 form a helical membrane-spanning segment; that stretch reads LFILTGVCCIYSLFNVISIVI. Over 289 to 412 the chain is Cytoplasmic; that stretch reads KQVLNWLLRR…NRLAETSVDR (124 aa). The segment covering 374–386 has biased composition (polar residues); sequence MANGHPRQSGSSS. The segment at 374-395 is disordered; that stretch reads MANGHPRQSGSSSRHNEFSGGV.

This sequence belongs to the two pore domain potassium channel (TC 1.A.1.8) family. In terms of assembly, homodimer. Heterodimer. Brain and heart.

The protein resides in the cell membrane. It carries out the reaction K(+)(in) = K(+)(out). With respect to regulation, the channel conductance is activated by arachidonic acid and inhibited by Ba(2+) ions, volatile anesthetics such as halothane and antiarrhythmic drug mexiletine. Insensitive to extracellular pH change. In terms of biological role, k(+) channel that conducts outward rectifying tonic currents potentiated by purinergic signals. Homo- and heterodimerizes to form functional channels with distinct regulatory and gating properties. Contributes most of K(+) currents at the plasma membrane of resting microglia. Maintains a depolarized membrane potential required for proper ramified microglia morphology and phagocytosis, selectively mediating microglial pruning of presynaptic compartments at hippocampal excitatory synapses. Upon local release of ATP caused by neuronal injury or infection, it is potentiated by purinergic signaling and contributes to ATP-triggered K(+) efflux underlying microglial NLRP3 inflammasome assembly and IL1B release. The protein is Potassium channel, subfamily K, member 13 of Danio rerio (Zebrafish).